The following is a 205-amino-acid chain: Probable GTP-binding protein EngB (205 aa).

In terms of domain architecture, EngB-type G spans Gln29–Ser203. Residues Gly37–Ser44, Gly64–Met68, Asp82–Gly85, Thr149–Asp152, and Phe182–Ser184 each bind GTP. Mg(2+)-binding residues include Ser44 and Thr66.

It belongs to the TRAFAC class TrmE-Era-EngA-EngB-Septin-like GTPase superfamily. EngB GTPase family. Mg(2+) serves as cofactor.

Necessary for normal cell division and for the maintenance of normal septation. The chain is Probable GTP-binding protein EngB from Coxiella burnetii (strain RSA 331 / Henzerling II).